Consider the following 488-residue polypeptide: Cobyric acid synthase (488 aa).

The 188-residue stretch at 248-435 folds into the GATase cobBQ-type domain; the sequence is VLKVVVPVLP…LHGLFESPAA (188 aa). The active-site Nucleophile is the C329. Residue H427 is part of the active site.

Belongs to the CobB/CobQ family. CobQ subfamily.

The protein operates within cofactor biosynthesis; adenosylcobalamin biosynthesis. Functionally, catalyzes amidations at positions B, D, E, and G on adenosylcobyrinic A,C-diamide. NH(2) groups are provided by glutamine, and one molecule of ATP is hydrogenolyzed for each amidation. The polypeptide is Cobyric acid synthase (Pseudomonas fluorescens (strain Pf0-1)).